Reading from the N-terminus, the 182-residue chain is Large ribosomal subunit protein uL10 (182 aa).

It belongs to the universal ribosomal protein uL10 family. Part of the ribosomal stalk of the 50S ribosomal subunit. The N-terminus interacts with L11 and the large rRNA to form the base of the stalk. The C-terminus forms an elongated spine to which L12 dimers bind in a sequential fashion forming a multimeric L10(L12)X complex.

Its function is as follows. Forms part of the ribosomal stalk, playing a central role in the interaction of the ribosome with GTP-bound translation factors. The polypeptide is Large ribosomal subunit protein uL10 (Janthinobacterium sp. (strain Marseille) (Minibacterium massiliensis)).